A 371-amino-acid polypeptide reads, in one-letter code: Queuine tRNA-ribosyltransferase (371 aa).

The active-site Proton acceptor is Asp90. Residues 90-94 (DSGGF), Asp144, Gln188, and Gly215 each bind substrate. Residues 246–252 (GVGTPED) form an RNA binding region. Catalysis depends on Asp265, which acts as the Nucleophile. An RNA binding; important for wobble base 34 recognition region spans residues 270–274 (TRNAR). 4 residues coordinate Zn(2+): Cys303, Cys305, Cys308, and His334.

Belongs to the queuine tRNA-ribosyltransferase family. As to quaternary structure, homodimer. Within each dimer, one monomer is responsible for RNA recognition and catalysis, while the other monomer binds to the replacement base PreQ1. The cofactor is Zn(2+).

The catalysed reaction is 7-aminomethyl-7-carbaguanine + guanosine(34) in tRNA = 7-aminomethyl-7-carbaguanosine(34) in tRNA + guanine. It functions in the pathway tRNA modification; tRNA-queuosine biosynthesis. In terms of biological role, catalyzes the base-exchange of a guanine (G) residue with the queuine precursor 7-aminomethyl-7-deazaguanine (PreQ1) at position 34 (anticodon wobble position) in tRNAs with GU(N) anticodons (tRNA-Asp, -Asn, -His and -Tyr). Catalysis occurs through a double-displacement mechanism. The nucleophile active site attacks the C1' of nucleotide 34 to detach the guanine base from the RNA, forming a covalent enzyme-RNA intermediate. The proton acceptor active site deprotonates the incoming PreQ1, allowing a nucleophilic attack on the C1' of the ribose to form the product. After dissociation, two additional enzymatic reactions on the tRNA convert PreQ1 to queuine (Q), resulting in the hypermodified nucleoside queuosine (7-(((4,5-cis-dihydroxy-2-cyclopenten-1-yl)amino)methyl)-7-deazaguanosine). The polypeptide is Queuine tRNA-ribosyltransferase (Neisseria meningitidis serogroup C (strain 053442)).